We begin with the raw amino-acid sequence, 232 residues long: 7-cyano-7-deazaguanine synthase 2 (232 aa).

Position 9 to 19 (9 to 19 (FSGGQDSTTCL)) interacts with ATP. Residues cysteine 189, cysteine 198, cysteine 201, and cysteine 204 each contribute to the Zn(2+) site.

It belongs to the QueC family. Zn(2+) is required as a cofactor.

It carries out the reaction 7-carboxy-7-deazaguanine + NH4(+) + ATP = 7-cyano-7-deazaguanine + ADP + phosphate + H2O + H(+). Its pathway is purine metabolism; 7-cyano-7-deazaguanine biosynthesis. In terms of biological role, catalyzes the ATP-dependent conversion of 7-carboxy-7-deazaguanine (CDG) to 7-cyano-7-deazaguanine (preQ(0)). The sequence is that of 7-cyano-7-deazaguanine synthase 2 from Pseudomonas fluorescens (strain ATCC BAA-477 / NRRL B-23932 / Pf-5).